Here is a 148-residue protein sequence, read N- to C-terminus: Large ribosomal subunit protein uL15 (148 aa).

The disordered stretch occupies residues 1 to 46 (MITIEDLKPTPGSNKKYKRLGRGQGSGKGKTAGKGHKGQKSRGTGK). Basic residues predominate over residues 31–45 (TAGKGHKGQKSRGTG).

This sequence belongs to the universal ribosomal protein uL15 family. Part of the 50S ribosomal subunit.

Its function is as follows. Binds to the 23S rRNA. This Fervidobacterium nodosum (strain ATCC 35602 / DSM 5306 / Rt17-B1) protein is Large ribosomal subunit protein uL15.